Consider the following 533-residue polypeptide: Subtilisin-like protease 1 (533 aa).

The first 19 residues, 1–19, serve as a signal peptide directing secretion; sequence MGVFRFISISLAAVSAANA. A propeptide spanning residues 20–116 is cleaved from the precursor; it reads AQILSMPHAQ…VEPDTIISVH (97 aa). Residues 34–115 form the Inhibitor I9 domain; it reads SYIVMMKDDT…FVEPDTIISV (82 aa). Positions 126–400 constitute a Peptidase S8 domain; that stretch reads SWGLARISNP…NVLINNGGAK (275 aa). Residues Asp-158 and His-190 each act as charge relay system in the active site. Residues 175–198 form a disordered region; the sequence is GSNQVNDGDDRDGSGHGTHTSGTM. N-linked (GlcNAc...) asparagine glycans are attached at residues Asn-233 and Asn-251. Residues 282–294 are compositionally biased toward polar residues; that stretch reads NDNQDAQSSSPAS. Residues 282–312 are disordered; it reads NDNQDAQSSSPASEPSVCTVGSSAEDDSRSS. Ser-345 (charge relay system) is an active-site residue. Over residues 378 to 394 the composition is skewed to polar residues; the sequence is TSSITDAGPGTPTNVLI. Positions 378-512 are disordered; it reads TSSITDAGPG…YPGGDNFDFD (135 aa). Over residues 405 to 470 the composition is skewed to pro residues; sequence NPNPAPSPSP…FPGEPFPGEP (66 aa). Over residues 471–487 the composition is skewed to low complexity; it reads FPGESFPGESFPGESAP. Pro residues predominate over residues 488–502; the sequence is APAPMPPSPQHPHTP.

This sequence belongs to the peptidase S8 family.

It localises to the secreted. Functionally, secreted subtilisin-like serine protease with keratinolytic activity that contributes to pathogenicity. The polypeptide is Subtilisin-like protease 1 (SUB1) (Arthroderma benhamiae (strain ATCC MYA-4681 / CBS 112371) (Trichophyton mentagrophytes)).